The chain runs to 427 residues: NAD kinase 2, mitochondrial (427 aa).

A mitochondrion-targeting transit peptide spans 1 to 33; that stretch reads MSLCLRLLCSVCGAAALRVPLGVSSLRALSGSA.

This sequence belongs to the NAD kinase family. As to quaternary structure, homodimer.

It localises to the mitochondrion. The catalysed reaction is NAD(+) + ATP = ADP + NADP(+) + H(+). Mitochondrial NAD(+) kinase that phosphorylates NAD(+) to yield NADP(+). Can use both ATP or inorganic polyphosphate as the phosphoryl donor. This is NAD kinase 2, mitochondrial (nadk2) from Xenopus tropicalis (Western clawed frog).